We begin with the raw amino-acid sequence, 977 residues long: MSADITETPNKQLLEQIRSPSFSLFNCIYELKNHTDSIGIQHELVKKLYSFPYEDLQFFIPQFVQLLVTYDSESMALEEFIITYSSRYPHFSLIVFWNLQAYIFELKNEPESRSFQAVRNLITKIQNIMFNADQQTVKAPEFRENFLPALVLCGAVASSVLLPSFKSYCLPMIKAQGKQQKSLVFKLVNFQKSLTKNLTLKNQRMSADIPKGSHSDDETATSSSIKPSLSRSASVPRRNTKKTSLSFSSDESEAYTTDDDDNKTSIELEKDFYKIDLDGLSKEKSANFLEPEENLNVNTAIKSKKRLSTLTSKVMTQPWNGIDGYNVNSQSLPDLSKAEGRDLIPFISSTESETSLLYHNNSISNDLQKNIPRQQKFSPGFDNVYLTKLLQVNYAKNETQFIMALQNISIRLSQVPKEARLSALRAELSIINDTLLPSEIDIPQLLPITSNRNKKYHKILKLNVNEASVLNSAERVPFLLFIEYLSDEIDFNPTTEYNQRIIARKKMNGATSMTVKKINSFSEVADGNFEKENKIKSSTPETVSNIIYNENTEEADLSEMPLDRKTTVSSDSFSPEMLVTPSITEQSKLSNFPSLNTKEVSTKVLADQMRIAAVMLQQLDSSGKANSEQSFLIKNRIVESMIALQDQFDSFDFEKLSQLQSDEPSAGERKLENDFKLGEDWNTKKQRIKKSSAYGHLKNWDLCSVIAKNGDDLPQEAFACQLISMISNIWKKNNIPVWTKRMKILITSANTGLVETITNAMSIHSIKKSFTEHSIKSGENSKGKIFTLLDYFHSVFGSPNSTSFRTAQQNFAKSLAAYSIICYVLQIKDRHNGNIMVDGDGHIIHIDFGFLLSNSPGSVGFEAAPFKLTVEYVELLGGVDSEIYSQFVYLCKQCFKSLRDNSEEIIEIVELMQKDSTLPCFNNGENTSVLLKQRLQLQLNDEDTDQFVENFLIGKSLGSMYTRLYDQFQMITQGIYS.

Residues 1–125 (MSADITETPN…QAVRNLITKI (125 aa)) form the PIK helical domain. The disordered stretch occupies residues 205-261 (MSADIPKGSHSDDETATSSSIKPSLSRSASVPRRNTKKTSLSFSSDESEAYTTDDDD). A compositionally biased stretch (polar residues) spans 220 to 233 (ATSSSIKPSLSRSA). A compositionally biased stretch (acidic residues) spans 250 to 261 (DESEAYTTDDDD). Positions 679-960 (EDWNTKKQRI…FLIGKSLGSM (282 aa)) constitute a PI3K/PI4K catalytic domain. The interval 685 to 691 (KQRIKKS) is G-loop. Residues 826-834 (QIKDRHNGN) form a catalytic loop region. Positions 845-869 (HIDFGFLLSNSPGSVGFEAAPFKLT) are activation loop.

The protein belongs to the PI3/PI4-kinase family. Type III PI4K subfamily.

It localises to the nucleus. The enzyme catalyses a 1,2-diacyl-sn-glycero-3-phospho-(1D-myo-inositol) + ATP = a 1,2-diacyl-sn-glycero-3-phospho-(1D-myo-inositol 4-phosphate) + ADP + H(+). Acts on phosphatidylinositol (PI) in the first committed step in the production of the second messenger inositol 1,4,5,-trisphosphate. This is Phosphatidylinositol 4-kinase PIK1alpha (PIKALPHA) from Candida albicans (strain SC5314 / ATCC MYA-2876) (Yeast).